Reading from the N-terminus, the 357-residue chain is Mannonate dehydratase (357 aa).

The protein belongs to the mannonate dehydratase family. Requires Fe(2+) as cofactor. Mn(2+) is required as a cofactor.

It carries out the reaction D-mannonate = 2-dehydro-3-deoxy-D-gluconate + H2O. Its pathway is carbohydrate metabolism; pentose and glucuronate interconversion. Catalyzes the dehydration of D-mannonate. In Sorangium cellulosum (strain So ce56) (Polyangium cellulosum (strain So ce56)), this protein is Mannonate dehydratase.